Here is a 66-residue protein sequence, read N- to C-terminus: Protein translocase subunit SecE (66 aa).

A helical transmembrane segment spans residues 29-49; it reads LVASTLVVVVAVFIFSLTCLV.

Belongs to the SecE/SEC61-gamma family. As to quaternary structure, component of the Sec protein translocase complex. Heterotrimer consisting of SecY, SecE and SecG subunits. The heterotrimers can form oligomers, although 1 heterotrimer is thought to be able to translocate proteins. Interacts with the ribosome. Interacts with SecDF, and other proteins may be involved. Interacts with SecA.

The protein resides in the cell inner membrane. Its function is as follows. Essential subunit of the Sec protein translocation channel SecYEG. Clamps together the 2 halves of SecY. May contact the channel plug during translocation. This chain is Protein translocase subunit SecE, found in Rickettsia rickettsii.